The following is a 201-amino-acid chain: NAD(P)H dehydrogenase (quinone) (201 aa).

The 186-residue stretch at 7 to 192 folds into the Flavodoxin-like domain; the sequence is ILVLYYSMYG…SIARYQGEYV (186 aa). FMN contacts are provided by residues 13–18 and 81–83; these read SMYGHI and TRF. Residue tyrosine 15 participates in NAD(+) binding. Position 101 (tryptophan 101) interacts with substrate. Residues 116 to 121 and histidine 136 contribute to the FMN site; that span reads STGTGG.

This sequence belongs to the WrbA family. Requires FMN as cofactor.

The catalysed reaction is a quinone + NADH + H(+) = a quinol + NAD(+). The enzyme catalyses a quinone + NADPH + H(+) = a quinol + NADP(+). This is NAD(P)H dehydrogenase (quinone) from Shigella sonnei (strain Ss046).